We begin with the raw amino-acid sequence, 375 residues long: MHCALYTAGTCRSCQWLEKPYPQQLTDKQHHLQSLLSDRDVAQWLEPIAGEQSAFRNKAKMVVSGSVERPLLGMLHRDGTAVDLSACPLYPASFSPMFDVLKSFIARAGLTPYNVARKRGELKYLLLTESTHSGGVMLRFVLRSDNKLAQLRAALPWLQQQLPQLRVISANIQPVHMAIMEGEREIPLTEQQALEEQFNQVPLYIRPQSFFQTNPQVAAELYATARDWVRALAIDSMWDLFCGVGGFGLHCALPETRLTGIEISAEAIACARQSAKTLGLQHVDFQALDSTRFATAEGSVPQLVLVNPPRRGIGKALCDYLNQMAPGYILYSSCNAESMAKDIEMLPDYRIERVQLFDMFPHTAHYEVLTLLVRN.

Cysteine 3, cysteine 11, cysteine 14, and cysteine 87 together coordinate [4Fe-4S] cluster. S-adenosyl-L-methionine contacts are provided by glutamine 212, phenylalanine 241, glutamate 262, and asparagine 307. Cysteine 334 serves as the catalytic Nucleophile.

Belongs to the class I-like SAM-binding methyltransferase superfamily. RNA M5U methyltransferase family. RlmC subfamily.

The enzyme catalyses uridine(747) in 23S rRNA + S-adenosyl-L-methionine = 5-methyluridine(747) in 23S rRNA + S-adenosyl-L-homocysteine + H(+). Its function is as follows. Catalyzes the formation of 5-methyl-uridine at position 747 (m5U747) in 23S rRNA. In Serratia proteamaculans (strain 568), this protein is 23S rRNA (uracil(747)-C(5))-methyltransferase RlmC.